We begin with the raw amino-acid sequence, 627 residues long: Hemocyanin D chain (627 aa).

Cu cation-binding residues include histidine 171, histidine 175, histidine 202, histidine 322, histidine 326, and histidine 362. Residue asparagine 445 is glycosylated (N-linked (GlcNAc...) asparagine). Cysteine 531 and cysteine 579 form a disulfide bridge.

This sequence belongs to the tyrosinase family. Hemocyanin subfamily. In terms of assembly, tarantula hemocyanin is a 24-chain polymer with seven different chains identified. In terms of tissue distribution, hemolymph.

It localises to the secreted. The protein resides in the extracellular space. Its function is as follows. Hemocyanins are copper-containing oxygen carriers occurring freely dissolved in the hemolymph of many mollusks and arthropods. This is Hemocyanin D chain (HCD) from Aphonopelma sp. (American tarantula).